The primary structure comprises 140 residues: Holo-[acyl-carrier-protein] synthase (140 aa).

Mg(2+) contacts are provided by Asp-8 and Glu-57.

The protein belongs to the P-Pant transferase superfamily. AcpS family. It depends on Mg(2+) as a cofactor.

The protein localises to the cytoplasm. The catalysed reaction is apo-[ACP] + CoA = holo-[ACP] + adenosine 3',5'-bisphosphate + H(+). Functionally, transfers the 4'-phosphopantetheine moiety from coenzyme A to a Ser of acyl-carrier-protein. The protein is Holo-[acyl-carrier-protein] synthase of Beijerinckia indica subsp. indica (strain ATCC 9039 / DSM 1715 / NCIMB 8712).